The sequence spans 340 residues: Aspartate-semialdehyde dehydrogenase (340 aa).

NADP(+) contacts are provided by residues 11-14 (TGEV) and 39-40 (RS). Arg100 serves as a coordination point for phosphate. The active-site Acyl-thioester intermediate is Cys131. Residue Gln158 participates in substrate binding. 161-162 (SG) is a binding site for NADP(+). A phosphate-binding site is contributed by Lys216. Residue Arg238 coordinates substrate. Residue His245 is the Proton acceptor of the active site. NADP(+) is bound at residue Asn318.

It belongs to the aspartate-semialdehyde dehydrogenase family. In terms of assembly, homodimer.

It catalyses the reaction L-aspartate 4-semialdehyde + phosphate + NADP(+) = 4-phospho-L-aspartate + NADPH + H(+). It functions in the pathway amino-acid biosynthesis; L-lysine biosynthesis via DAP pathway; (S)-tetrahydrodipicolinate from L-aspartate: step 2/4. Its pathway is amino-acid biosynthesis; L-methionine biosynthesis via de novo pathway; L-homoserine from L-aspartate: step 2/3. It participates in amino-acid biosynthesis; L-threonine biosynthesis; L-threonine from L-aspartate: step 2/5. Its function is as follows. Catalyzes the NADPH-dependent formation of L-aspartate-semialdehyde (L-ASA) by the reductive dephosphorylation of L-aspartyl-4-phosphate. In Aquifex aeolicus (strain VF5), this protein is Aspartate-semialdehyde dehydrogenase.